The sequence spans 177 residues: Large ribosomal subunit protein uL6 (177 aa).

The protein belongs to the universal ribosomal protein uL6 family. Part of the 50S ribosomal subunit.

This protein binds to the 23S rRNA, and is important in its secondary structure. It is located near the subunit interface in the base of the L7/L12 stalk, and near the tRNA binding site of the peptidyltransferase center. In Rickettsia canadensis (strain McKiel), this protein is Large ribosomal subunit protein uL6.